The primary structure comprises 119 residues: Hydrogenase maturation factor HypA (119 aa).

Position 2 (H2) interacts with Ni(2+). Zn(2+)-binding residues include C73, C76, C90, and C93.

It belongs to the HypA/HybF family.

Involved in the maturation of [NiFe] hydrogenases. Required for nickel insertion into the metal center of the hydrogenase. This Wolinella succinogenes (strain ATCC 29543 / DSM 1740 / CCUG 13145 / JCM 31913 / LMG 7466 / NCTC 11488 / FDC 602W) (Vibrio succinogenes) protein is Hydrogenase maturation factor HypA.